A 251-amino-acid polypeptide reads, in one-letter code: Derlin-1 (251 aa).

The residue at position 2 (serine 2) is an N-acetylserine. Topologically, residues 2–15 (SDIGDWFRSIPAIT) are cytoplasmic. A helical transmembrane segment spans residues 16-31 (RYWFAATVAVPLIGKL). Topologically, residues 32 to 69 (GIISPAYFFLWPEAFLYRFQIWRPFTATFYFPVGPGTG) are lumenal. Residues 70-89 (FLYLVNLYFLYQYSTRLEAG) form a helical membrane-spanning segment. The Cytoplasmic portion of the chain corresponds to 90 to 94 (AFDGR). Residues 95-115 (PADYLFMLLFNWICIVITGLA) form a helical membrane-spanning segment. Residues 116–122 (MDMQLLM) lie on the Lumenal side of the membrane. Residues 123 to 137 (IPLIMSVLYVWAQLN) traverse the membrane as a helical segment. Over 138–154 (RDLIVSFWFGTRFKACY) the chain is Cytoplasmic. A helical transmembrane segment spans residues 155–166 (LPWVILGFNYII). Residues 167–170 (GGSV) are Lumenal-facing. The helical transmembrane segment at 171 to 189 (INELIGNLVGHLYFFLMFR) threads the bilayer. The Cytoplasmic segment spans residues 190–251 (YPMDLGGRNF…WGQGFRLGDQ (62 aa)). Residue serine 201 is modified to Phosphoserine. Phosphothreonine is present on threonine 202. Serine 226 carries the post-translational modification Phosphoserine. Residues 229 to 251 (RAADQNGGGGRHNWGQGFRLGDQ) form a disordered region. An SHP-box motif is present at residues 241-248 (NWGQGFRL).

This sequence belongs to the derlin family. In terms of assembly, homotetramer. The four subunits of the tetramer are arranged in a twofold symmetry. Forms homo- and heterooligomers with DERL2 and DERL3; binding to DERL3 is poorer than that between DERL2 and DERL3. Interacts (via SHP-box motif) with VCP. Interacts with AMFR, SELENOS, SEL1L, SELENOK and SYVN1, as well as with SEL1L-SYVN1 and VCP-SELENOS protein complexes; this interaction is weaker than that observed between DERL2 and these complexes. Interacts with NGLY1 and YOD1. Does not bind to EDEM1. Interacts with DNAJB9. Interacts with RNF103. Interacts with HM13. Interacts with XBP1 isoform 1 (via luminal/ectodomain domain); the interaction obviates the need for ectodomain shedding prior HM13/SPP-mediated XBP1 isoform 1 cleavage. Interacts with the signal recognition particle/SRP and the SRP receptor; in the process of endoplasmic reticulum stress-induced pre-emptive quality control. May interact with UBXN6. Interacts with ZFAND2B; probably through VCP. Interacts with CCDC47. Interacts with C18orf32. May interact with TRAM1. Forms a complex with SVIP and VCP/p97. Widely expressed, with lowest levels in brain and heart.

It localises to the endoplasmic reticulum membrane. Functionally, functional component of endoplasmic reticulum-associated degradation (ERAD) for misfolded lumenal proteins. Forms homotetramers which encircle a large channel traversing the endoplasmic reticulum (ER) membrane. This allows the retrotranslocation of misfolded proteins from the ER into the cytosol where they are ubiquitinated and degraded by the proteasome. The channel has a lateral gate within the membrane which provides direct access to membrane proteins with no need to reenter the ER lumen first. May mediate the interaction between VCP and the misfolded protein. Also involved in endoplasmic reticulum stress-induced pre-emptive quality control, a mechanism that selectively attenuates the translocation of newly synthesized proteins into the endoplasmic reticulum and reroutes them to the cytosol for proteasomal degradation. By controlling the steady-state expression of the IGF1R receptor, indirectly regulates the insulin-like growth factor receptor signaling pathway. This is Derlin-1 from Mus musculus (Mouse).